Reading from the N-terminus, the 104-residue chain is Small ribosomal subunit protein bS6c (104 aa).

It belongs to the bacterial ribosomal protein bS6 family.

The protein resides in the plastid. The protein localises to the cyanelle. Its function is as follows. Binds together with bS18 to 16S ribosomal RNA. This chain is Small ribosomal subunit protein bS6c (rps6), found in Cyanophora paradoxa.